Reading from the N-terminus, the 983-residue chain is MRRFEFELARMSGAAFCVVTGYRLLTSKWLADRVEDYRQRVIADRKQILRDAAVIRTSIQKQMELVRISVRKGHSHQEAATERNSATDTMIGVVEKCGYEPYIISPSPREKEYHGSRQFYSLADFRQDYRRDEITDRHVIVMTDVDYYVDMHELVGLGVPILLYTFQPSTVSGEVKDGYFTITDDHVHYRVAGGKDVRHRIWNYNQDTMFVRSKPRGFWASLKQILRDITGITALCGYLYLKLGIAPFGDQVTLFTVDQFKMGEHRNIVSIVPFATCRSNLLKISEYGAELDYMRYQQRNNNANFNAVTYISQEGPLISLGLEGNFASVQLPLQDFENIRTAYELSKNNNLSDTVRRSARSCKEAAIIHKCLQAGCDLASEVVHKPGELARHYQALGDTYDIDPSEQGKCYAREYAPGPLTQTAVFPSESRSNELATIDGRIAGPQAKAKSREHITPKMHKVARDFVRHLVPTAGLGRPYPLTYVEEHQTKPLQRARNDANRYHDEFTMIVKAFQKKEAYNAPNYPRNISTVPHTQNVKLSSYTYAFKEAVLQHVPWYMPTHTPAEIAEAVQSLAASSTELVETDYSKFDGTFLRFMRENVEFAIYKRWVHLDHLTELSTLLGNELQAPAVTRLGIKYDPDCSRLSGSALTTDGNSIANAFVSYLAGRQAGMDDDEAWTWIGIVYGDDGLRSGNVSDALLSKTASSLGFDLKIVNRAPRGSPVTFLSRVYLDPWSSPASVQSPLRTLLKLHTTCDTQSDIEDVGWAKTQAYLVTDCLTPFIGHWCRAYQRNCTARVVQYADYNDIPFWVKNEDHVGNSWPQSDSVDWNDVVANELGLTTAELLKHLAALDAYTGPVSGLPRLTTSLDLEPKMPVALDGEVQAGPSQQPQTDKDGTSPTGDRSAPRRARTALQDADGRACRSRRSDRSPGKRDANVRDKRQRRSTTPPRSRPSVPGPSSSGRRTDGDRVRGGAARQRQRRRSPV.

The 123-residue stretch at 579 to 701 (TELVETDYSK…SGNVSDALLS (123 aa)) folds into the RdRp catalytic domain. Residues 879 to 983 (EVQAGPSQQP…RQRQRRRSPV (105 aa)) form a disordered region. Positions 883–899 (GPSQQPQTDKDGTSPTG) are enriched in polar residues. Residues 914–937 (ADGRACRSRRSDRSPGKRDANVRD) are compositionally biased toward basic and acidic residues. A compositionally biased stretch (low complexity) spans 943-960 (STTPPRSRPSVPGPSSSG).

It belongs to the nodaviridae RNA polymerase family.

It catalyses the reaction RNA(n) + a ribonucleoside 5'-triphosphate = RNA(n+1) + diphosphate. Functionally, RNA-dependent RNA polymerase which replicates the viral genome composed of 2 RNA segments, RNA1 and RNA2. This Dicentrarchus labrax (European seabass) protein is RNA-directed RNA polymerase.